The following is a 317-amino-acid chain: Beta-ketoacyl-[acyl-carrier-protein] synthase III (317 aa).

Catalysis depends on residues C112 and H244. Residues 245–249 (QANLR) are ACP-binding. The active site involves N274.

This sequence belongs to the thiolase-like superfamily. FabH family. In terms of assembly, homodimer.

The protein localises to the cytoplasm. The enzyme catalyses malonyl-[ACP] + acetyl-CoA + H(+) = 3-oxobutanoyl-[ACP] + CO2 + CoA. It functions in the pathway lipid metabolism; fatty acid biosynthesis. In terms of biological role, catalyzes the condensation reaction of fatty acid synthesis by the addition to an acyl acceptor of two carbons from malonyl-ACP. Catalyzes the first condensation reaction which initiates fatty acid synthesis and may therefore play a role in governing the total rate of fatty acid production. Possesses both acetoacetyl-ACP synthase and acetyl transacylase activities. Its substrate specificity determines the biosynthesis of branched-chain and/or straight-chain of fatty acids. This Salmonella paratyphi B (strain ATCC BAA-1250 / SPB7) protein is Beta-ketoacyl-[acyl-carrier-protein] synthase III.